The following is a 608-amino-acid chain: UvrABC system protein C (608 aa).

One can recognise a GIY-YIG domain in the interval 13–91 (HKPGVYIMHD…IKKNSPKYNI (79 aa)). One can recognise a UVR domain in the interval 202 to 237 (DELTKKLTDKMMAASKNLNFELAAKLRDSITNIQVI).

It belongs to the UvrC family. In terms of assembly, interacts with UvrB in an incision complex.

The protein localises to the cytoplasm. Its function is as follows. The UvrABC repair system catalyzes the recognition and processing of DNA lesions. UvrC both incises the 5' and 3' sides of the lesion. The N-terminal half is responsible for the 3' incision and the C-terminal half is responsible for the 5' incision. This is UvrABC system protein C from Finegoldia magna (strain ATCC 29328 / DSM 20472 / WAL 2508) (Peptostreptococcus magnus).